An 89-amino-acid chain; its full sequence is Peroxidase (89 aa).

Histidine 52 is a binding site for heme. Ca(2+) contacts are provided by threonine 53 and aspartate 68.

The cofactor is heme b. Ca(2+) is required as a cofactor.

Its subcellular location is the secreted. It carries out the reaction 2 a phenolic donor + H2O2 = 2 a phenolic radical donor + 2 H2O. Removal of H(2)O(2), oxidation of toxic reductants, biosynthesis and degradation of lignin, suberization, auxin catabolism, response to environmental stresses such as wounding, pathogen attack and oxidative stress. These functions might be dependent on each isozyme/isoform in each plant tissue. Active against p-coumaryl alcohol, coniferyl alcohol and coniferyl aldehyde. In Ginkgo biloba (Ginkgo), this protein is Peroxidase.